The chain runs to 230 residues: A-type ATP synthase subunit D (230 aa).

A disordered region spans residues 204-230 (AKKEEEEDALAAEEEAEEEPEAVTADD). A compositionally biased stretch (acidic residues) spans 208 to 230 (EEEDALAAEEEAEEEPEAVTADD).

Belongs to the V-ATPase D subunit family. Has multiple subunits with at least A(3), B(3), C, D, E, F, H, I and proteolipid K(x).

Its subcellular location is the cell membrane. Its function is as follows. Component of the A-type ATP synthase that produces ATP from ADP in the presence of a proton gradient across the membrane. The chain is A-type ATP synthase subunit D from Haloarcula marismortui (strain ATCC 43049 / DSM 3752 / JCM 8966 / VKM B-1809) (Halobacterium marismortui).